The sequence spans 303 residues: D-alanine--D-alanine ligase (303 aa).

The region spanning 100–295 (KQLLRRHGIL…FPALIARLIE (196 aa)) is the ATP-grasp domain. 127-180 (GLGYPLFVKPNTGGSSLCLSRVTQPEGLAPALEAVFAHCGEAIVEPAIPGVEVT) is a binding site for ATP. Residues aspartate 249, glutamate 262, and asparagine 264 each contribute to the Mg(2+) site.

This sequence belongs to the D-alanine--D-alanine ligase family. The cofactor is Mg(2+). Requires Mn(2+) as cofactor.

The protein resides in the cytoplasm. The enzyme catalyses 2 D-alanine + ATP = D-alanyl-D-alanine + ADP + phosphate + H(+). It participates in cell wall biogenesis; peptidoglycan biosynthesis. Cell wall formation. This Nitratidesulfovibrio vulgaris (strain ATCC 29579 / DSM 644 / CCUG 34227 / NCIMB 8303 / VKM B-1760 / Hildenborough) (Desulfovibrio vulgaris) protein is D-alanine--D-alanine ligase.